The following is a 447-amino-acid chain: Probable 3-deoxy-D-manno-octulosonic acid transferase, mitochondrial (447 aa).

The transit peptide at Met1–Arg32 directs the protein to the mitochondrion. The active-site Proton acceptor is the Glu66. CMP is bound by residues Pro278–Arg279, Leu320–Glu322, and Asn347–Glu350.

Belongs to the glycosyltransferase group 1 family. Glycosyltransferase 30 subfamily. Expressed in leaves, stems and flowers.

It localises to the mitochondrion. The enzyme catalyses lipid IVA (E. coli) + CMP-3-deoxy-beta-D-manno-octulosonate = alpha-Kdo-(2-&gt;6)-lipid IVA (E. coli) + CMP + H(+). It catalyses the reaction alpha-Kdo-(2-&gt;6)-lipid IVA (E. coli) + CMP-3-deoxy-beta-D-manno-octulosonate = alpha-Kdo-(2-&gt;4)-alpha-Kdo-(2-&gt;6)-lipid IVA (E. coli) + CMP + H(+). It participates in glycolipid biosynthesis; KDO(2)-lipid A biosynthesis; KDO(2)-lipid A from CMP-3-deoxy-D-manno-octulosonate and lipid IV(A): step 1/4. Its pathway is glycolipid biosynthesis; KDO(2)-lipid A biosynthesis; KDO(2)-lipid A from CMP-3-deoxy-D-manno-octulosonate and lipid IV(A): step 2/4. In terms of biological role, involved in the biosynthesis of lipid A, a phosphorylated glycolipid that in bacteria anchors the lipopolysaccharide to the outer membrane of the cell. Catalyzes the transfer of two 3-deoxy-D-manno-octulosonate (Kdo) residues from CMP-Kdo to lipid IV(A), the tetraacyldisaccharide-1,4'-bisphosphate precursor of lipid A. Lipid A-like molecules in plants may serve as structural components of the outer membranes of mitochondria and/or chloroplasts, or may be involved in signal transduction or plant defense responses. This is Probable 3-deoxy-D-manno-octulosonic acid transferase, mitochondrial (KDTA) from Arabidopsis thaliana (Mouse-ear cress).